Here is a 273-residue protein sequence, read N- to C-terminus: Phosphatidylglycerol--prolipoprotein diacylglyceryl transferase (273 aa).

Helical transmembrane passes span I21 to A41, L60 to Y80, V95 to W115, F124 to M144, S176 to I196, G203 to V223, and F236 to V256. R143 is an a 1,2-diacyl-sn-glycero-3-phospho-(1'-sn-glycerol) binding site.

This sequence belongs to the Lgt family.

The protein resides in the cell inner membrane. It catalyses the reaction L-cysteinyl-[prolipoprotein] + a 1,2-diacyl-sn-glycero-3-phospho-(1'-sn-glycerol) = an S-1,2-diacyl-sn-glyceryl-L-cysteinyl-[prolipoprotein] + sn-glycerol 1-phosphate + H(+). Its pathway is protein modification; lipoprotein biosynthesis (diacylglyceryl transfer). Its function is as follows. Catalyzes the transfer of the diacylglyceryl group from phosphatidylglycerol to the sulfhydryl group of the N-terminal cysteine of a prolipoprotein, the first step in the formation of mature lipoproteins. The protein is Phosphatidylglycerol--prolipoprotein diacylglyceryl transferase of Vibrio atlanticus (strain LGP32) (Vibrio splendidus (strain Mel32)).